Consider the following 105-residue polypeptide: Small ribosomal subunit protein uS10 (105 aa).

Belongs to the universal ribosomal protein uS10 family. Part of the 30S ribosomal subunit.

Functionally, involved in the binding of tRNA to the ribosomes. In Aster yellows witches'-broom phytoplasma (strain AYWB), this protein is Small ribosomal subunit protein uS10.